The following is a 322-amino-acid chain: NADH oxidoreductase HCR (322 aa).

Residues 7–107 (QCPWRMQVHH…SDAMGEFTCD (101 aa)) form the FAD-binding FR-type domain. The segment at 111 to 213 (EDKFLLLAAG…APYMDWVEQE (103 aa)) is oxidoreductase. The region spanning 237 to 322 (SGLKFTKLQP…CHPQGDLVLA (86 aa)) is the 2Fe-2S ferredoxin-type domain. The [2Fe-2S] cluster site is built by Cys-273, Cys-278, Cys-281, and Cys-311.

This sequence in the N-terminal section; belongs to the FAD-binding oxidoreductase type 6 family. Requires [2Fe-2S] cluster as cofactor. FAD is required as a cofactor.

In terms of biological role, NADH oxidoreductase acting in concert with HCP. The chain is NADH oxidoreductase HCR (hcr) from Escherichia coli (strain K12).